Here is a 249-residue protein sequence, read N- to C-terminus: Probable transcriptional regulatory protein Meso_3192 (249 aa).

This sequence belongs to the TACO1 family.

It localises to the cytoplasm. The sequence is that of Probable transcriptional regulatory protein Meso_3192 from Chelativorans sp. (strain BNC1).